The primary structure comprises 467 residues: Argininosuccinate lyase 1 (467 aa).

The protein belongs to the lyase 1 family. Argininosuccinate lyase subfamily.

The protein resides in the cytoplasm. The catalysed reaction is 2-(N(omega)-L-arginino)succinate = fumarate + L-arginine. The protein operates within amino-acid biosynthesis; L-arginine biosynthesis; L-arginine from L-ornithine and carbamoyl phosphate: step 3/3. The chain is Argininosuccinate lyase 1 from Rhizobium meliloti (strain 1021) (Ensifer meliloti).